Here is a 196-residue protein sequence, read N- to C-terminus: UPF0056 membrane protein BUsg_434 (196 aa).

6 consecutive transmembrane segments (helical) span residues 8–28, 45–65, 71–91, 105–125, 134–154, and 174–194; these read TILLILIMDPLGNLPIFMTIL, IIALIVMLIFLFVGEKILTIL, TVSISGGIILFLIAIKMIFPS, FLVPLAIPLVAGPSLLATLML, MPYLVGSLLIAWFFTIIILLL, and MGLILIMLSTQMFLDGIKAWF.

It belongs to the UPF0056 (MarC) family.

Its subcellular location is the cell membrane. The chain is UPF0056 membrane protein BUsg_434 from Buchnera aphidicola subsp. Schizaphis graminum (strain Sg).